A 490-amino-acid polypeptide reads, in one-letter code: GTPase Der (490 aa).

2 consecutive EngA-type G domains span residues 3–166 and 203–376; these read PVVA…MDDV and IKLA…DSST. GTP-binding positions include 9–16, 56–60, 118–121, 209–216, 256–260, and 321–324; these read GRPNVGKS, DTGGI, NKTD, DTAGV, and NKWD. Residues 377–461 form the KH-like domain; it reads RRVSTAMLTR…PIRIQFKEGE (85 aa).

The protein belongs to the TRAFAC class TrmE-Era-EngA-EngB-Septin-like GTPase superfamily. EngA (Der) GTPase family. Associates with the 50S ribosomal subunit.

In terms of biological role, GTPase that plays an essential role in the late steps of ribosome biogenesis. The polypeptide is GTPase Der (Salmonella enteritidis PT4 (strain P125109)).